A 440-amino-acid polypeptide reads, in one-letter code: Argininosuccinate lyase (440 aa).

It belongs to the lyase 1 family. Argininosuccinate lyase subfamily.

It is found in the cytoplasm. It catalyses the reaction 2-(N(omega)-L-arginino)succinate = fumarate + L-arginine. The protein operates within amino-acid biosynthesis; L-arginine biosynthesis; L-arginine from L-ornithine and carbamoyl phosphate: step 3/3. The sequence is that of Argininosuccinate lyase from Clostridium botulinum (strain Loch Maree / Type A3).